We begin with the raw amino-acid sequence, 474 residues long: Ribulose bisphosphate carboxylase large chain (474 aa).

Substrate is bound by residues N117 and T167. The active-site Proton acceptor is the K169. K171 lines the substrate pocket. Mg(2+)-binding residues include K195, D197, and E198. K195 carries the post-translational modification N6-carboxylysine. The active-site Proton acceptor is H288. Substrate is bound by residues R289, H321, and S373.

It belongs to the RuBisCO large chain family. Type I subfamily. In terms of assembly, heterohexadecamer of 8 large chains and 8 small chains. The cofactor is Mg(2+).

It catalyses the reaction 2 (2R)-3-phosphoglycerate + 2 H(+) = D-ribulose 1,5-bisphosphate + CO2 + H2O. The enzyme catalyses D-ribulose 1,5-bisphosphate + O2 = 2-phosphoglycolate + (2R)-3-phosphoglycerate + 2 H(+). Its function is as follows. RuBisCO catalyzes two reactions: the carboxylation of D-ribulose 1,5-bisphosphate, the primary event in carbon dioxide fixation, as well as the oxidative fragmentation of the pentose substrate. Both reactions occur simultaneously and in competition at the same active site. The protein is Ribulose bisphosphate carboxylase large chain of Hydrogenophilus thermoluteolus (Pseudomonas hydrogenothermophila).